A 166-amino-acid chain; its full sequence is Small ribosomal subunit protein uS5 (166 aa).

Residues 11–74 (LQEKLIAVNR…EKARRNMINV (64 aa)) form the S5 DRBM domain.

The protein belongs to the universal ribosomal protein uS5 family. As to quaternary structure, part of the 30S ribosomal subunit. Contacts proteins S4 and S8.

Functionally, with S4 and S12 plays an important role in translational accuracy. In terms of biological role, located at the back of the 30S subunit body where it stabilizes the conformation of the head with respect to the body. The polypeptide is Small ribosomal subunit protein uS5 (Cronobacter sakazakii (strain ATCC BAA-894) (Enterobacter sakazakii)).